We begin with the raw amino-acid sequence, 504 residues long: ATP synthase subunit alpha, chloroplastic (504 aa).

170 to 177 (GDRQTGKT) provides a ligand contact to ATP.

The protein belongs to the ATPase alpha/beta chains family. F-type ATPases have 2 components, CF(1) - the catalytic core - and CF(0) - the membrane proton channel. CF(1) has five subunits: alpha(3), beta(3), gamma(1), delta(1), epsilon(1). CF(0) has four main subunits: a, b, b' and c.

It is found in the plastid. The protein resides in the chloroplast thylakoid membrane. The enzyme catalyses ATP + H2O + 4 H(+)(in) = ADP + phosphate + 5 H(+)(out). Its function is as follows. Produces ATP from ADP in the presence of a proton gradient across the membrane. The alpha chain is a regulatory subunit. The chain is ATP synthase subunit alpha, chloroplastic from Ostreococcus tauri.